We begin with the raw amino-acid sequence, 291 residues long: Acetyl-coenzyme A carboxylase carboxyl transferase subunit beta (291 aa).

The CoA carboxyltransferase N-terminal domain maps to 29–291 (IMTKCPQCKK…TGGEREWLEN (263 aa)). Residues cysteine 33, cysteine 36, cysteine 52, and cysteine 55 each coordinate Zn(2+). The segment at 33–55 (CPQCKKIMLTKELDKNLRVCMNC) adopts a C4-type zinc-finger fold.

The protein belongs to the AccD/PCCB family. Acetyl-CoA carboxylase is a heterohexamer composed of biotin carboxyl carrier protein (AccB), biotin carboxylase (AccC) and two subunits each of ACCase subunit alpha (AccA) and ACCase subunit beta (AccD). Zn(2+) is required as a cofactor.

The protein resides in the cytoplasm. It carries out the reaction N(6)-carboxybiotinyl-L-lysyl-[protein] + acetyl-CoA = N(6)-biotinyl-L-lysyl-[protein] + malonyl-CoA. It participates in lipid metabolism; malonyl-CoA biosynthesis; malonyl-CoA from acetyl-CoA: step 1/1. Its function is as follows. Component of the acetyl coenzyme A carboxylase (ACC) complex. Biotin carboxylase (BC) catalyzes the carboxylation of biotin on its carrier protein (BCCP) and then the CO(2) group is transferred by the transcarboxylase to acetyl-CoA to form malonyl-CoA. The sequence is that of Acetyl-coenzyme A carboxylase carboxyl transferase subunit beta from Bacillus pumilus (strain SAFR-032).